The sequence spans 328 residues: Tetraacyldisaccharide 4'-kinase (328 aa).

52-59 (NAGGTGKT) lines the ATP pocket.

It belongs to the LpxK family.

It catalyses the reaction a lipid A disaccharide + ATP = a lipid IVA + ADP + H(+). It functions in the pathway glycolipid biosynthesis; lipid IV(A) biosynthesis; lipid IV(A) from (3R)-3-hydroxytetradecanoyl-[acyl-carrier-protein] and UDP-N-acetyl-alpha-D-glucosamine: step 6/6. Transfers the gamma-phosphate of ATP to the 4'-position of a tetraacyldisaccharide 1-phosphate intermediate (termed DS-1-P) to form tetraacyldisaccharide 1,4'-bis-phosphate (lipid IVA). This is Tetraacyldisaccharide 4'-kinase from Jannaschia sp. (strain CCS1).